The chain runs to 199 residues: Recombination protein RecR (199 aa).

Residues 57 to 72 (CQSCRTYTEETLCPIC) form a C4-type zinc finger. One can recognise a Toprim domain in the interval 81–176 (STICVVETPA…MISRIAHGVP (96 aa)).

This sequence belongs to the RecR family.

Functionally, may play a role in DNA repair. It seems to be involved in an RecBC-independent recombinational process of DNA repair. It may act with RecF and RecO. In Shewanella baltica (strain OS155 / ATCC BAA-1091), this protein is Recombination protein RecR.